We begin with the raw amino-acid sequence, 164 residues long: MANPIVGRVWKFGDDINTDAIIPGKYLRTRDMQIFGTHAMEGIDPEFTKKAKPGDIIVAGTNFGCGSSREQAPLALKHSGIACIVAKSFARIFFRNAINIGLPLMEADVECQEGDEIKVDLFKGEVLVPEKGIFKGNKLPDFLLDILNDGGLVAHRKKVKGEHK.

The short motif at Tyr-26–Thr-29 is the YLRT element.

The protein belongs to the LeuD family. LeuD type 2 subfamily. In terms of assembly, heterotetramer of 2 HacA and 2 HacB proteins. Cannot form a complex with LeuC.

It carries out the reaction (2R)-homocitrate = (2R,3S)-homoisocitrate. It catalyses the reaction (2R)-homocitrate = cis-homoaconitate + H2O. The catalysed reaction is (2R,3S)-homoisocitrate = cis-homoaconitate + H2O. The enzyme catalyses cis-(homo)2aconitate + H2O = (2R,3S)-iso(homo)2citrate. It carries out the reaction cis-(homo)3aconitate + H2O = (2R,3S)-iso(homo)3citrate. It participates in organic acid metabolism; 2-oxosuberate biosynthesis. Its function is as follows. Component of a hydro-lyase with broad substrate specificity for cis-unsaturated tricarboxylic acids. Catalyzes both the reversible dehydration of (R)-homocitrate ((R)-2-hydroxybutane-1,2,4-tricarboxylate) to produce cis-homoaconitate ((Z)-but-1-ene-1,2,4-tricarboxylate), and its hydration to homoisocitrate ((1R,2S)-1-hydroxybutane-1,2,4-tricarboxylate). Is also able to hydrate the analogous longer chain substrates cis-homo(2)-aconitate, cis-homo(3)-aconitate. These reactions are part of the biosynthesis pathway of coenzyme B. In Methanosarcina acetivorans (strain ATCC 35395 / DSM 2834 / JCM 12185 / C2A), this protein is Methanogen homoaconitase small subunit 2 (hacB2).